The primary structure comprises 315 residues: Ribosomal RNA small subunit methyltransferase H (315 aa).

Residues 33 to 35, Asp52, Phe84, Asp106, and Gln113 each bind S-adenosyl-L-methionine; that span reads GGH. The disordered stretch occupies residues 294 to 315; that stretch reads SSDELEENNRSHSAKLRVAEKL.

Belongs to the methyltransferase superfamily. RsmH family.

The protein resides in the cytoplasm. The enzyme catalyses cytidine(1402) in 16S rRNA + S-adenosyl-L-methionine = N(4)-methylcytidine(1402) in 16S rRNA + S-adenosyl-L-homocysteine + H(+). Functionally, specifically methylates the N4 position of cytidine in position 1402 (C1402) of 16S rRNA. In Lactobacillus johnsonii (strain CNCM I-12250 / La1 / NCC 533), this protein is Ribosomal RNA small subunit methyltransferase H.